Here is a 438-residue protein sequence, read N- to C-terminus: Glutamyl-tRNA reductase (438 aa).

Substrate contacts are provided by residues 55-58 (TCNR), S118, 123-125 (ETQ), and Q129. C56 acts as the Nucleophile in catalysis. 198-203 (GAGDMI) is an NADP(+) binding site.

Belongs to the glutamyl-tRNA reductase family. In terms of assembly, homodimer.

The enzyme catalyses (S)-4-amino-5-oxopentanoate + tRNA(Glu) + NADP(+) = L-glutamyl-tRNA(Glu) + NADPH + H(+). It participates in porphyrin-containing compound metabolism; protoporphyrin-IX biosynthesis; 5-aminolevulinate from L-glutamyl-tRNA(Glu): step 1/2. Functionally, catalyzes the NADPH-dependent reduction of glutamyl-tRNA(Glu) to glutamate 1-semialdehyde (GSA). This Polynucleobacter asymbioticus (strain DSM 18221 / CIP 109841 / QLW-P1DMWA-1) (Polynucleobacter necessarius subsp. asymbioticus) protein is Glutamyl-tRNA reductase.